A 303-amino-acid chain; its full sequence is Porphobilinogen deaminase (303 aa).

An S-(dipyrrolylmethanemethyl)cysteine modification is found at Cys235.

It belongs to the HMBS family. Monomer. Requires dipyrromethane as cofactor.

The catalysed reaction is 4 porphobilinogen + H2O = hydroxymethylbilane + 4 NH4(+). It participates in porphyrin-containing compound metabolism; protoporphyrin-IX biosynthesis; coproporphyrinogen-III from 5-aminolevulinate: step 2/4. Its function is as follows. Tetrapolymerization of the monopyrrole PBG into the hydroxymethylbilane pre-uroporphyrinogen in several discrete steps. The sequence is that of Porphobilinogen deaminase from Campylobacter fetus subsp. fetus (strain 82-40).